The primary structure comprises 586 residues: MFREAIYHRPKDNYAYACANGELHIRIRTKKDDMKEVTLVYGDTYEFDDNKWTYSTAHMKKTGSDQLFDYWLASVTPRYKRLRYGFIVNDRKDSTCFTEKGFYPEPPVNDISYYFSFPYVNQADIFQAPEWVKDTVWYQIFPERFANGNKDNDPDGTLPWGSREPEIDNFFGGDLEGVIEHIDYLKELGIGGIYFTPIFKAHSNHKYDTIDYMEIDPQFGTKETLKKLIDVCHKNGIKVMLDAVFNHSGVFFPPFQDVVEKGKNSKYQDWFHIREFPLVMEPRPNYDTFGFTSSMPKFKTENPEVKEYLLEVGRYWVREFDIDGWRLDVANEVSHAFWREFRREVKAIKPDLYILGEIWHDSLPWLRGDQFDAVMNYPLSTNIVNLFANQSVSVKEFVENMSHVIHMYPDTVNEAAFNLVGSHDTPRILTQCGEDVERLKQVFVLLLTFIGTPCIYYGDEIGLTGGQDPGCRKCMEWNPDQQNRELLQHVRKLIQLRSENPLLANEGELTFVPPKNEEDPCLAYTKSNEEKTIMIIINKSKNSVEYPLSFDAAEQTVKNLWNQEQLILQNGQTLELKANDFKILEF.

5 residues coordinate Ca(2+): asparagine 147, asparagine 152, aspartate 153, glycine 172, and aspartate 174. Substrate-binding residues include histidine 247 and arginine 326. The active-site Nucleophile is aspartate 328. Catalysis depends on glutamate 357, which acts as the Proton donor. Residues 423 to 424 (HD), aspartate 468, and arginine 472 contribute to the substrate site.

This sequence belongs to the glycosyl hydrolase 13 family. Requires Ca(2+) as cofactor.

The catalysed reaction is hydrolysis of (1-&gt;4)-alpha-D-glucosidic linkages in polysaccharides so as to remove successive alpha-maltose residues from the non-reducing ends of the chains.. Converts starch into maltose. The polypeptide is Maltogenic alpha-amylase (Bacillus acidopullulyticus).